The chain runs to 302 residues: Rab effector Noc2 (302 aa).

A RabBD domain is found at 41-158 (QRRSQCLSPG…KRSGAWFYKG (118 aa)). The segment at 89–146 (GNGLSQCLLCGEVLGFLGSSSVFCKDCRKKVCTKCGIEASPGQKRPLWLCKICSEQRE) adopts an FYVE-type zinc-finger fold. Zn(2+) is bound by residues Cys-95, Cys-98, Cys-112, Cys-115, Cys-120, Cys-123, Cys-138, and Cys-141. Residues 174 to 302 (DPHFRPLPVE…KRHTWATPRY (129 aa)) form a disordered region. A compositionally biased stretch (polar residues) spans 185–197 (TETQPPSAETSRV). Ser-248 carries the post-translational modification Phosphoserine. Positions 258–269 (SHLSGSQSSLGS) are enriched in low complexity.

Recruited to dense-core vesicles through specific interaction with RAB27A in endocrine cells. Interacts with RAB3A, RAB3B, RAB3C and RAB3D. Interacts with ZYX. As to expression, highly expressed in pancreatic islets. High to moderate expression in adrenal gland, pituitary gland and ovary.

The protein resides in the cytoplasm. Its subcellular location is the cytoplasmic vesicle. It is found in the secretory vesicle membrane. In terms of biological role, rab GTPase effector involved in the late steps of regulated exocytosis, both in endocrine and exocrine cells. Regulates the exocytosis of dense-core vesicles in neuroendocrine cells through interaction with RAB27A. Acts as a potential RAB3B effector protein in epithelial cells. This Mus musculus (Mouse) protein is Rab effector Noc2 (Rph3al).